Reading from the N-terminus, the 130-residue chain is MAITQNYGTGRRKSSTARVFLRKGSGNITVNGRPLDEFFGRETARMIVRQPLELTKNTESFDILVTAAGGGTTGQAGAIRLGIARALVEYDETLKSELRKAGFMTRDAREVERKKVGLHKARRATQFSKR.

It belongs to the universal ribosomal protein uS9 family.

This chain is Small ribosomal subunit protein uS9, found in Stenotrophomonas maltophilia (strain R551-3).